We begin with the raw amino-acid sequence, 440 residues long: Histidinol dehydrogenase (440 aa).

3 residues coordinate NAD(+): Tyr133, Gln194, and Asn217. Substrate is bound by residues Ser240, Gln262, and His265. Zn(2+) is bound by residues Gln262 and His265. Catalysis depends on proton acceptor residues Glu330 and His331. The substrate site is built by His331, Asp364, Glu418, and His423. Position 364 (Asp364) interacts with Zn(2+). Zn(2+) is bound at residue His423.

Belongs to the histidinol dehydrogenase family. The cofactor is Zn(2+).

The enzyme catalyses L-histidinol + 2 NAD(+) + H2O = L-histidine + 2 NADH + 3 H(+). Its pathway is amino-acid biosynthesis; L-histidine biosynthesis; L-histidine from 5-phospho-alpha-D-ribose 1-diphosphate: step 9/9. Functionally, catalyzes the sequential NAD-dependent oxidations of L-histidinol to L-histidinaldehyde and then to L-histidine. The chain is Histidinol dehydrogenase from Nitrosospira multiformis (strain ATCC 25196 / NCIMB 11849 / C 71).